The chain runs to 203 residues: N-(5'-phosphoribosyl)anthranilate isomerase (203 aa).

This sequence belongs to the TrpF family.

It catalyses the reaction N-(5-phospho-beta-D-ribosyl)anthranilate = 1-(2-carboxyphenylamino)-1-deoxy-D-ribulose 5-phosphate. Its pathway is amino-acid biosynthesis; L-tryptophan biosynthesis; L-tryptophan from chorismate: step 3/5. This Sulfurihydrogenibium sp. (strain YO3AOP1) protein is N-(5'-phosphoribosyl)anthranilate isomerase.